A 163-amino-acid chain; its full sequence is Pheromone-binding protein (163 aa).

An N-terminal signal peptide occupies residues 1–21; the sequence is MLRKISLLLLPVFVAINLVHS. 3 disulfide bridges follow: Cys40-Cys75, Cys71-Cys129, and Cys118-Cys138.

This sequence belongs to the PBP/GOBP family. As to quaternary structure, homodimer. As to expression, antenna.

In terms of biological role, this major soluble protein in olfactory sensilla of male moths might serve to solubilize the extremely hydrophobic pheromone molecules and to transport pheromone through the aqueous lymph to receptors located on olfactory cilia. This is Pheromone-binding protein from Antheraea polyphemus (Polyphemus moth).